Reading from the N-terminus, the 365-residue chain is Pyridoxal reductase, chloroplastic (365 aa).

The transit peptide at 1–15 (MALTLSTTKTFTNIN) directs the protein to the chloroplast. The Proton donor role is filled by Tyr94.

The protein belongs to the aldo/keto reductase family. As to quaternary structure, monomer. In terms of tissue distribution, expressed in cotyledons, embryos, flowers, shoots, roots and seeds.

Its subcellular location is the plastid. The protein localises to the chloroplast. It catalyses the reaction pyridoxine + NADP(+) = pyridoxal + NADPH + H(+). It functions in the pathway cofactor degradation; B6 vitamer degradation; pyridoxal from pyridoxine (dehydrogenase route): step 1/1. In terms of biological role, catalyzes the reduction of pyridoxal (PL) with NADPH and oxidation of pyridoxine (PN) with NADP(+). Involved in the PLP salvage pathway. In Arabidopsis thaliana (Mouse-ear cress), this protein is Pyridoxal reductase, chloroplastic (PLR1).